A 545-amino-acid chain; its full sequence is CTP synthase (545 aa).

Residues 1–266 (MTTNYIFVTG…DDYICKRFSL (266 aa)) form an amidoligase domain region. A CTP-binding site is contributed by Ser14. Ser14 provides a ligand contact to UTP. Residues 15–20 (SLGKGI) and Asp72 contribute to the ATP site. Mg(2+) is bound by residues Asp72 and Glu140. CTP contacts are provided by residues 147–149 (DIE), 187–192 (KTKPTQ), and Lys223. UTP contacts are provided by residues 187–192 (KTKPTQ) and Lys223. Residue 239-241 (KDV) participates in ATP binding. Residues 291-542 (NIGMVGKYVE…VKAASEYQKR (252 aa)) form the Glutamine amidotransferase type-1 domain. An L-glutamine-binding site is contributed by Gly352. Cys379 (nucleophile; for glutamine hydrolysis) is an active-site residue. L-glutamine contacts are provided by residues 380–383 (LGMQ), Glu403, and Arg470. Catalysis depends on residues His515 and Glu517.

This sequence belongs to the CTP synthase family. In terms of assembly, homotetramer.

The catalysed reaction is UTP + L-glutamine + ATP + H2O = CTP + L-glutamate + ADP + phosphate + 2 H(+). The enzyme catalyses L-glutamine + H2O = L-glutamate + NH4(+). It carries out the reaction UTP + NH4(+) + ATP = CTP + ADP + phosphate + 2 H(+). It functions in the pathway pyrimidine metabolism; CTP biosynthesis via de novo pathway; CTP from UDP: step 2/2. Its activity is regulated as follows. Allosterically activated by GTP, when glutamine is the substrate; GTP has no effect on the reaction when ammonia is the substrate. The allosteric effector GTP functions by stabilizing the protein conformation that binds the tetrahedral intermediate(s) formed during glutamine hydrolysis. Inhibited by the product CTP, via allosteric rather than competitive inhibition. Its function is as follows. Catalyzes the ATP-dependent amination of UTP to CTP with either L-glutamine or ammonia as the source of nitrogen. Regulates intracellular CTP levels through interactions with the four ribonucleotide triphosphates. This chain is CTP synthase, found in Erwinia tasmaniensis (strain DSM 17950 / CFBP 7177 / CIP 109463 / NCPPB 4357 / Et1/99).